The primary structure comprises 89 residues: Small ribosomal subunit protein uS15 (89 aa).

The protein belongs to the universal ribosomal protein uS15 family. As to quaternary structure, part of the 30S ribosomal subunit. Forms a bridge to the 50S subunit in the 70S ribosome, contacting the 23S rRNA.

Functionally, one of the primary rRNA binding proteins, it binds directly to 16S rRNA where it helps nucleate assembly of the platform of the 30S subunit by binding and bridging several RNA helices of the 16S rRNA. Its function is as follows. Forms an intersubunit bridge (bridge B4) with the 23S rRNA of the 50S subunit in the ribosome. The polypeptide is Small ribosomal subunit protein uS15 (Streptococcus pyogenes serotype M2 (strain MGAS10270)).